The primary structure comprises 252 residues: Trans-aconitate 2-methyltransferase (252 aa).

Belongs to the methyltransferase superfamily. Tam family.

The protein localises to the cytoplasm. The enzyme catalyses trans-aconitate + S-adenosyl-L-methionine = (E)-3-(methoxycarbonyl)pent-2-enedioate + S-adenosyl-L-homocysteine. Functionally, catalyzes the S-adenosylmethionine monomethyl esterification of trans-aconitate. The chain is Trans-aconitate 2-methyltransferase from Escherichia coli O7:K1 (strain IAI39 / ExPEC).